The sequence spans 561 residues: Sesquiterpene synthase 1 (561 aa).

Asp313, Asp317, Asp458, and Glu466 together coordinate Mg(2+). The DDXXD motif signature appears at 313 to 317 (DDIYD).

This sequence belongs to the terpene synthase family. Tpsa subfamily. The cofactor is Mn(2+). It depends on Mg(2+) as a cofactor.

It localises to the cytoplasm. It carries out the reaction (2E,6E)-farnesyl diphosphate = (1S,8aR)-delta-cadinene + diphosphate. The protein operates within secondary metabolite biosynthesis; terpenoid biosynthesis. In terms of biological role, involved in the biosynthesis of delta-cadinene. This chain is Sesquiterpene synthase 1 (STS1), found in Thapsia garganica (Deadly carrot).